We begin with the raw amino-acid sequence, 362 residues long: uncharacterized protein (362 aa).

This is an uncharacterized protein from Caenorhabditis elegans.